Reading from the N-terminus, the 573-residue chain is Phosphomethylpyrimidine synthase (573 aa).

Substrate contacts are provided by residues asparagine 190, methionine 219, tyrosine 248, histidine 284, 304 to 306, 345 to 348, and glutamate 384; these read SRG and DGLR. Zn(2+) is bound at residue histidine 388. Residue tyrosine 411 participates in substrate binding. Histidine 452 is a binding site for Zn(2+). The [4Fe-4S] cluster site is built by cysteine 532, cysteine 535, and cysteine 540.

It belongs to the ThiC family. [4Fe-4S] cluster serves as cofactor.

It carries out the reaction 5-amino-1-(5-phospho-beta-D-ribosyl)imidazole + S-adenosyl-L-methionine = 4-amino-2-methyl-5-(phosphooxymethyl)pyrimidine + CO + 5'-deoxyadenosine + formate + L-methionine + 3 H(+). The protein operates within cofactor biosynthesis; thiamine diphosphate biosynthesis. Catalyzes the synthesis of the hydroxymethylpyrimidine phosphate (HMP-P) moiety of thiamine from aminoimidazole ribotide (AIR) in a radical S-adenosyl-L-methionine (SAM)-dependent reaction. This is Phosphomethylpyrimidine synthase from Geobacillus sp. (strain WCH70).